The primary structure comprises 364 residues: NF-kappa-B inhibitor epsilon (364 aa).

The disordered stretch occupies residues 1-108 (MSDARKGPDE…GSPLPPAGVL (108 aa)). Position 18 is a phosphoserine (Ser-18). The span at 36–48 (PGSGSSQSGCPQP) shows a compositional bias: low complexity. Basic and acidic residues predominate over residues 51–70 (HAPETHKEPEKEDADGERAD). Over residues 93 to 104 (PSPPAPGSPLPP) the composition is skewed to pro residues. ANK repeat units follow at residues 122 to 155 (DGDTLLHLAVIHEAPSVLFCCLAFLPQEVLDIQN), 157 to 186 (LYQTALHLAVHLDQPDVVRALVLKGASRIL), 190 to 219 (HGDTALHVACRRQNLACACCLLEEQPEPGR), 233 to 262 (QGLACLHIATLQRNQPLIELLLQNGADIDV), 267 to 296 (SGKTALHLAVETQERSLVQFLLQAGARVDA), and 300 to 329 (NGCTPLHLAAGRGLNSISSTLCEAGADSLL).

It belongs to the NF-kappa-B inhibitor family. Interacts with RELA, REL, NFKB1 nuclear factor NF-kappa-B p50 subunit and NFKB2 nuclear factor NF-kappa-B p52 subunit. Interacts with HNRNPA2B1; the interaction may be mediated by the RRM2 domain of HNRNPA2B1, and HNRNPA2B1 may interact simultaneously with FAM76B and either NFKBIA or NFKBIE to form a complex. In terms of processing, serine phosphorylated; followed by proteasome-dependent degradation.

The protein localises to the cytoplasm. Its function is as follows. Sequesters NF-kappa-B transcription factor complexes in the cytoplasm, thereby inhibiting their activity. Sequestered complexes include NFKB1/p50-RELA/p65 and NFKB1/p50-REL/c-Rel complexes. Limits B-cell activation in response to pathogens, and also plays an important role in B-cell development. The chain is NF-kappa-B inhibitor epsilon (Nfkbie) from Mus musculus (Mouse).